We begin with the raw amino-acid sequence, 105 residues long: V-type ATP synthase subunit F (105 aa).

The protein belongs to the V-ATPase F subunit family.

Functionally, produces ATP from ADP in the presence of a proton gradient across the membrane. This Fusobacterium nucleatum subsp. nucleatum (strain ATCC 25586 / DSM 15643 / BCRC 10681 / CIP 101130 / JCM 8532 / KCTC 2640 / LMG 13131 / VPI 4355) protein is V-type ATP synthase subunit F.